Here is a 326-residue protein sequence, read N- to C-terminus: Light-induced protein, chloroplastic (326 aa).

Residues 1–63 constitute a chloroplast transit peptide; the sequence is MASISSLNQI…TNPKPKFTAQ (63 aa).

This sequence belongs to the LIPC family. Associates with the major light-harvesting antenna complex polypeptides of the PSII oxygen-evolving complex. Expressed at high levels in leaves and in the petals and anthers of flowers.

It localises to the plastid. The protein resides in the chloroplast thylakoid membrane. Its function is as follows. Required for normal plant growth. May be both photoprotective and play an ancillary role in photosynthesis. May structurally stabilize thylakoids during osmotic and oxidative stress. This is Light-induced protein, chloroplastic from Solanum demissum (Wild potato).